Reading from the N-terminus, the 656-residue chain is tRNA 5-methylaminomethyl-2-thiouridine biosynthesis bifunctional protein MnmC (656 aa).

The interval 1-236 (MTDPLIPAVL…KRAMLVGRFA (236 aa)) is tRNA (mnm(5)s(2)U34)-methyltransferase. An FAD-dependent cmnm(5)s(2)U34 oxidoreductase region spans residues 260–656 (IGTGLAGCAV…LRALRQGTVS (397 aa)).

This sequence in the N-terminal section; belongs to the methyltransferase superfamily. tRNA (mnm(5)s(2)U34)-methyltransferase family. The protein in the C-terminal section; belongs to the DAO family. FAD serves as cofactor.

It is found in the cytoplasm. It carries out the reaction 5-aminomethyl-2-thiouridine(34) in tRNA + S-adenosyl-L-methionine = 5-methylaminomethyl-2-thiouridine(34) in tRNA + S-adenosyl-L-homocysteine + H(+). Its function is as follows. Catalyzes the last two steps in the biosynthesis of 5-methylaminomethyl-2-thiouridine (mnm(5)s(2)U) at the wobble position (U34) in tRNA. Catalyzes the FAD-dependent demodification of cmnm(5)s(2)U34 to nm(5)s(2)U34, followed by the transfer of a methyl group from S-adenosyl-L-methionine to nm(5)s(2)U34, to form mnm(5)s(2)U34. The protein is tRNA 5-methylaminomethyl-2-thiouridine biosynthesis bifunctional protein MnmC of Paraburkholderia xenovorans (strain LB400).